We begin with the raw amino-acid sequence, 93 residues long: Small ribosomal subunit protein uS19 (93 aa).

The protein belongs to the universal ribosomal protein uS19 family.

Its function is as follows. Protein S19 forms a complex with S13 that binds strongly to the 16S ribosomal RNA. The sequence is that of Small ribosomal subunit protein uS19 from Geobacter metallireducens (strain ATCC 53774 / DSM 7210 / GS-15).